The following is a 625-amino-acid chain: Dopamine beta-hydroxylase (625 aa).

Residues 1–9 lie on the Cytoplasmic side of the membrane; it reads MQVPSPSAR. Residues 10-30 form a helical; Signal-anchor for type II membrane protein membrane-spanning segment; the sequence is EAASMYGTAVAVFLVLLVAVL. The Intragranular segment spans residues 31 to 625; sequence QGLAPPESPL…TVVNIGGGKV (595 aa). The DOMON domain occupies 50–166; it reads GDLELSWDVS…GTVHLVYGVL (117 aa). 6 disulfides stabilise this stretch: cysteine 147-cysteine 604, cysteine 224-cysteine 275, cysteine 261-cysteine 287, cysteine 382-cysteine 495, cysteine 386-cysteine 573, and cysteine 458-cysteine 480. The N-linked (GlcNAc...) asparagine glycan is linked to asparagine 177. Tyrosine 222 is an active-site residue. Positions 254 and 255 each coordinate Cu(2+). An N-linked (GlcNAc...) asparagine glycan is attached at asparagine 315. Residues histidine 325, histidine 404, histidine 406, and methionine 479 each coordinate Cu(2+). Residue histidine 404 is part of the active site. Residue asparagine 574 is glycosylated (N-linked (GlcNAc...) asparagine).

The protein belongs to the copper type II ascorbate-dependent monooxygenase family. In terms of assembly, homotetramer; composed of two disulfide-linked dimers. Cu(2+) serves as cofactor. Proteolytic cleavage after the membrane-anchor leads to the release of the soluble form. Post-translationally, N-glycosylated.

It localises to the cytoplasmic vesicle. The protein resides in the secretory vesicle lumen. Its subcellular location is the secretory vesicle. It is found in the chromaffin granule lumen. The protein localises to the secreted. It localises to the secretory vesicle membrane. The protein resides in the chromaffin granule membrane. It catalyses the reaction dopamine + 2 L-ascorbate + O2 = (R)-noradrenaline + 2 monodehydro-L-ascorbate radical + H2O. It functions in the pathway catecholamine biosynthesis; (R)-noradrenaline biosynthesis; (R)-noradrenaline from dopamine: step 1/1. In terms of biological role, catalyzes the hydroxylation of dopamine to noradrenaline (also known as norepinephrine), and is thus vital for regulation of these neurotransmitters. The protein is Dopamine beta-hydroxylase (DBH) of Canis lupus familiaris (Dog).